Consider the following 295-residue polypeptide: Ethanolamine ammonia-lyase small subunit (295 aa).

The adenosylcob(III)alamin site is built by Val-207, Glu-228, and Cys-258.

The protein belongs to the EutC family. As to quaternary structure, the basic unit is a heterodimer which dimerizes to form tetramers. The heterotetramers trimerize; 6 large subunits form a core ring with 6 small subunits projecting outwards. Adenosylcob(III)alamin serves as cofactor.

The protein localises to the bacterial microcompartment. The catalysed reaction is ethanolamine = acetaldehyde + NH4(+). Its pathway is amine and polyamine degradation; ethanolamine degradation. Its function is as follows. Catalyzes the deamination of various vicinal amino-alcohols to oxo compounds. Allows this organism to utilize ethanolamine as the sole source of nitrogen and carbon in the presence of external vitamin B12. This Escherichia coli (strain UTI89 / UPEC) protein is Ethanolamine ammonia-lyase small subunit.